We begin with the raw amino-acid sequence, 101 residues long: Small ribosomal subunit protein uS14 (101 aa).

It belongs to the universal ribosomal protein uS14 family. Part of the 30S ribosomal subunit. Contacts proteins S3 and S10.

In terms of biological role, binds 16S rRNA, required for the assembly of 30S particles and may also be responsible for determining the conformation of the 16S rRNA at the A site. This chain is Small ribosomal subunit protein uS14, found in Ruegeria pomeroyi (strain ATCC 700808 / DSM 15171 / DSS-3) (Silicibacter pomeroyi).